The following is a 177-amino-acid chain: uncharacterized protein (177 aa).

This is an uncharacterized protein from Grapevine virus A (isolate Is 151) (GVA).